The primary structure comprises 259 residues: MPRLHDHVWNYPSAGAARPYSLPRGMIAAAACPQGPGVPEPEHAPRGQRAGTTGCSARPGSWHHDLVQRSLVLFSFGVVLALVLNLLQIQRNVTLFPDEVIATIFSSAWWVPPCCGTAAAVVGLLYPCIDSHLGEPHKFKREWASVMRCIAVFVGINHASAKLDFANNVQLSLTLAALSLGLWWTFDRSRSGLGLGITIAFLATLITQFLVYNGVYQYTSPDFLYIRSWLPCIFFSGGVTVGNIGRQLAMGVPEKPHSD.

The Cytoplasmic segment spans residues Met-1–Leu-66. Positions Pro-36 to Cys-55 are disordered. A helical membrane pass occupies residues Val-67–Ile-89. Over Gln-90 to Ala-108 the chain is Extracellular. The helical transmembrane segment at Trp-109–Tyr-126 threads the bilayer. At Pro-127–Arg-141 the chain is on the cytoplasmic side. Residues Lys-138 and Lys-140 each participate in a glycyl lysine isopeptide (Lys-Gly) (interchain with G-Cter in ubiquitin) cross-link. A helical transmembrane segment spans residues Glu-142–Asp-164. Residues Phe-165–Asn-167 are Extracellular-facing. The chain crosses the membrane as a helical span at residues Asn-168 to Phe-186. Residues Asp-187–Ser-191 are Cytoplasmic-facing. Residue Ser-189 is modified to Phosphoserine. A helical membrane pass occupies residues Gly-192–Asn-213. Topologically, residues Gly-214–Arg-227 are extracellular. A helical transmembrane segment spans residues Ser-228–Gly-245. Topologically, residues Arg-246–Asp-259 are cytoplasmic. A KxHxx motif is present at residues Pro-253–Asp-259.

It belongs to the INSIG family. Interacts with SCAP; interaction is direct and only takes place in the presence of sterols; it prevents interaction between SCAP and the coat protein complex II (COPII). Associates with the SCAP-SREBP complex (composed of SCAP and SREBF1/SREBP1 or SREBF2/SREBP2); association is mediated via its interaction with SCAP and only takes place in the presence of sterols. Interaction with SCAP is mutually exclusive with PAQR3. Interacts with HMGCR (via its SSD); the interaction, accelerated by sterols, leads to the recruitment of HMGCR to AMFR/gp78 for its ubiquitination by the sterol-mediated ERAD pathway. Interacts with AMFR/gp78 (via its membrane domain); the interaction recruits HMCR at the ER membrane for its ubiquitination and degradation by the sterol-mediated ERAD pathway. Interacts with SOAT2/ACAT2; leading to promote recruitment of AMFR/gp78 and subsequent ubiquitination of SOAT2/ACAT2. Interacts with RNF139. Interacts with RNF145. Phosphorylation at Ser-189 by PCK1 reduces binding to oxysterol, disrupting the interaction between INSIG1 and SCAP, thereby promoting nuclear translocation of SREBP proteins (SREBF1/SREBP1 or SREBF2/SREBP2) and subsequent transcription of downstream lipogenesis-related genes. In terms of processing, ubiquitinated by AMFR/gp78 in response to sterol deprivation, leading to its degradation: when the SCAP-SREBP complex becomes dissociated from INSIG1, INSIG1 is then ubiquitinated and degraded in proteasomes. Although ubiquitination is required for rapid INSIG1 degradation, it is not required for release of the SCAP-SREBP complex. Ubiquitinated by RNF139.

Its subcellular location is the endoplasmic reticulum membrane. Its function is as follows. Oxysterol-binding protein that mediates feedback control of cholesterol synthesis by controlling both endoplasmic reticulum to Golgi transport of SCAP and degradation of HMGCR. Acts as a negative regulator of cholesterol biosynthesis by mediating the retention of the SCAP-SREBP complex in the endoplasmic reticulum, thereby blocking the processing of sterol regulatory element-binding proteins (SREBPs) SREBF1/SREBP1 and SREBF2/SREBP2. Binds oxysterol, including 25-hydroxycholesterol, regulating interaction with SCAP and retention of the SCAP-SREBP complex in the endoplasmic reticulum. In presence of oxysterol, interacts with SCAP, retaining the SCAP-SREBP complex in the endoplasmic reticulum, thereby preventing SCAP from escorting SREBF1/SREBP1 and SREBF2/SREBP2 to the Golgi. Sterol deprivation or phosphorylation by PCK1 reduce oxysterol-binding, disrupting the interaction between INSIG1 and SCAP, thereby promoting Golgi transport of the SCAP-SREBP complex, followed by processing and nuclear translocation of SREBF1/SREBP1 and SREBF2/SREBP2. Also regulates cholesterol synthesis by regulating degradation of HMGCR: initiates the sterol-mediated ubiquitin-mediated endoplasmic reticulum-associated degradation (ERAD) of HMGCR via recruitment of the reductase to the ubiquitin ligases AMFR/gp78 and/or RNF139. Also regulates degradation of SOAT2/ACAT2 when the lipid levels are low: initiates the ubiquitin-mediated degradation of SOAT2/ACAT2 via recruitment of the ubiquitin ligases AMFR/gp78. This Mus musculus (Mouse) protein is Insulin-induced gene 1 protein.